The chain runs to 247 residues: Adenosylcobinamide-GDP ribazoletransferase (247 aa).

6 helical membrane-spanning segments follow: residues 34–54 (IVMFPFIGLILGGVSGLIFIL), 59–79 (CGIPLAALFCILALALLTGGF), 113–133 (GGLALIFVLLAKILVVSELAL), 138–158 (MLAALAAACAAGRGSAVLLMY), 171–191 (VFIGKVSGRQTCITLGLAVIV), and 194–214 (VLLPGMQGLAAMVVTLAAIFI).

It belongs to the CobS family. The cofactor is Mg(2+).

The protein localises to the cell inner membrane. It catalyses the reaction alpha-ribazole + adenosylcob(III)inamide-GDP = adenosylcob(III)alamin + GMP + H(+). The enzyme catalyses alpha-ribazole 5'-phosphate + adenosylcob(III)inamide-GDP = adenosylcob(III)alamin 5'-phosphate + GMP + H(+). Its pathway is cofactor biosynthesis; adenosylcobalamin biosynthesis; adenosylcobalamin from cob(II)yrinate a,c-diamide: step 7/7. Functionally, joins adenosylcobinamide-GDP and alpha-ribazole to generate adenosylcobalamin (Ado-cobalamin). Also synthesizes adenosylcobalamin 5'-phosphate from adenosylcobinamide-GDP and alpha-ribazole 5'-phosphate. The chain is Adenosylcobinamide-GDP ribazoletransferase from Salmonella schwarzengrund (strain CVM19633).